Here is a 200-residue protein sequence, read N- to C-terminus: GTP-binding protein ypt2 (200 aa).

A GTP-binding site is contributed by 16 to 23; that stretch reads GDSGVGKS. The Effector region motif lies at 38–46; sequence FITTIGIDF. GTP is bound by residues 64–68 and 122–125; these read DTAGQ and NKCD. 2 S-geranylgeranyl cysteine lipidation sites follow: Cys-199 and Cys-200.

The protein belongs to the small GTPase superfamily. Rab family.

Its subcellular location is the cell membrane. Its function is as follows. Protein transport. Probably involved in vesicular traffic. The protein is GTP-binding protein ypt2 (ypt2) of Schizosaccharomyces pombe (strain 972 / ATCC 24843) (Fission yeast).